A 353-amino-acid chain; its full sequence is Photosystem II protein D1 (353 aa).

Threonine 2 carries the post-translational modification N-acetylthreonine. Residue threonine 2 is modified to Phosphothreonine. Helical transmembrane passes span 29–46 (YIGWFGVLMIPTLLTATS), 118–133 (HFLLGVACYMGREWEL), and 142–156 (WIAVAYSAPVAAAAA). Histidine 118 is a chlorophyll a binding site. Position 126 (tyrosine 126) interacts with pheophytin a. Aspartate 170 and glutamate 189 together coordinate [CaMn4O5] cluster. A helical transmembrane segment spans residues 197-218 (FHMLGVAGVFGGSLFSAMHGSL). Histidine 198 serves as a coordination point for chlorophyll a. Residues histidine 215 and 264 to 265 (SF) each bind a quinone. Histidine 215 contributes to the Fe cation binding site. Histidine 272 is a Fe cation binding site. The helical transmembrane segment at 274-288 (FLAAWPVVGIWFTAL) threads the bilayer. [CaMn4O5] cluster-binding residues include histidine 332, glutamate 333, aspartate 342, and alanine 344. Residues 345-353 (SVDAPSING) constitute a propeptide that is removed on maturation.

This sequence belongs to the reaction center PufL/M/PsbA/D family. As to quaternary structure, PSII is composed of 1 copy each of membrane proteins PsbA, PsbB, PsbC, PsbD, PsbE, PsbF, PsbH, PsbI, PsbJ, PsbK, PsbL, PsbM, PsbT, PsbX, PsbY, PsbZ, Psb30/Ycf12, at least 3 peripheral proteins of the oxygen-evolving complex and a large number of cofactors. It forms dimeric complexes. Requires The D1/D2 heterodimer binds P680, chlorophylls that are the primary electron donor of PSII, and subsequent electron acceptors. It shares a non-heme iron and each subunit binds pheophytin, quinone, additional chlorophylls, carotenoids and lipids. D1 provides most of the ligands for the Mn4-Ca-O5 cluster of the oxygen-evolving complex (OEC). There is also a Cl(-1) ion associated with D1 and D2, which is required for oxygen evolution. The PSII complex binds additional chlorophylls, carotenoids and specific lipids. as cofactor. Tyr-161 forms a radical intermediate that is referred to as redox-active TyrZ, YZ or Y-Z. In terms of processing, C-terminally processed by CTPA; processing is essential to allow assembly of the oxygen-evolving complex and thus photosynthetic growth.

The protein resides in the plastid. Its subcellular location is the chloroplast thylakoid membrane. The catalysed reaction is 2 a plastoquinone + 4 hnu + 2 H2O = 2 a plastoquinol + O2. In terms of biological role, photosystem II (PSII) is a light-driven water:plastoquinone oxidoreductase that uses light energy to abstract electrons from H(2)O, generating O(2) and a proton gradient subsequently used for ATP formation. It consists of a core antenna complex that captures photons, and an electron transfer chain that converts photonic excitation into a charge separation. The D1/D2 (PsbA/PsbD) reaction center heterodimer binds P680, the primary electron donor of PSII as well as several subsequent electron acceptors. The sequence is that of Photosystem II protein D1 from Adiantum capillus-veneris (Maidenhair fern).